The sequence spans 83 residues: Cytochrome c6 (83 aa).

The heme c site is built by Cys14, Cys17, and His18. Lys24 bears the N6-methyllysine; partial mark. Heme c is bound at residue Met59.

It belongs to the cytochrome c family. PetJ subfamily. In terms of assembly, monomer. Post-translationally, binds 1 heme c group covalently per subunit. In terms of processing, 50% of the molecules were found to be monomethylated at Lys-24.

The protein localises to the plastid. It localises to the chloroplast thylakoid lumen. Functionally, functions as an electron carrier between membrane-bound cytochrome b6-f and photosystem I in oxygenic photosynthesis. This Diacronema lutheri (Unicellular marine alga) protein is Cytochrome c6 (petJ).